A 348-amino-acid polypeptide reads, in one-letter code: Peptidyl-Lys metalloendopeptidase (348 aa).

The N-terminal stretch at 1-18 (MFSSVMVALVSLAVAVSA) is a signal peptide. Residues 19–181 (NPGLSLKVSG…RATPTLTRPV (163 aa)) constitute a propeptide that is removed on maturation. Cystine bridges form between C186–C256 and C258–C278. A glycan (O-linked (Man) threonine; partial) is linked at T223. Residue H298 coordinates Zn(2+). E299 is a catalytic residue. The Zn(2+) site is built by H302 and D311.

Zn(2+) is required as a cofactor.

Its subcellular location is the secreted. The catalysed reaction is Preferential cleavage in proteins: -Xaa-|-Lys- (in which Xaa may be Pro).. Inhibited by chelating agents such as EDTA and 1,10-phenanthroline. This Grifola frondosa (Maitake) protein is Peptidyl-Lys metalloendopeptidase (MEP).